Consider the following 1940-residue polypeptide: Rho GTPase-activating protein 32 (1940 aa).

A PX; atypical domain is found at 154–248 (SKELVFLVQI…LTWMEIDNKG (95 aa)). In terms of domain architecture, SH3 spans 262–324 (PAIAAAHVIK…PSECVELIND (63 aa)). The Rho-GAP domain occupies 375–570 (CDLGEHLLNS…FILNHVEVLF (196 aa)). 5 disordered regions span residues 646–746 (FPSE…LSAS), 1035–1163 (RANQ…FSVT), 1219–1264 (FTTG…PPVR), 1430–1454 (KHPR…YTED), and 1675–1786 (RSRS…HSSA). The segment covering 1047 to 1061 (PQGASASESPQELSH) has biased composition (polar residues). 2 stretches are compositionally biased toward low complexity: residues 1081–1094 (LALA…QASA) and 1145–1163 (SRKT…FSVT). Over residues 1691–1707 (ETKDVRYPGRTEGDERT) the composition is skewed to basic and acidic residues. Over residues 1725-1734 (PQKQSGSSRS) the composition is skewed to polar residues. Residues 1736 to 1755 (MQHDISTEQHSQDTLHRQPS) show a composition bias toward basic and acidic residues.

Belongs to the PX domain-containing GAP family.

It is found in the cytoplasm. Its subcellular location is the membrane. It localises to the cell membrane. GTPase-activating protein (GAP) promoting GTP hydrolysis on RHOA, CDC42 and RAC1 small GTPases. This Xenopus laevis (African clawed frog) protein is Rho GTPase-activating protein 32 (arhgap32).